Reading from the N-terminus, the 214-residue chain is ATP phosphoribosyltransferase (214 aa).

This sequence belongs to the ATP phosphoribosyltransferase family. Short subfamily. Heteromultimer composed of HisG and HisZ subunits.

Its subcellular location is the cytoplasm. It carries out the reaction 1-(5-phospho-beta-D-ribosyl)-ATP + diphosphate = 5-phospho-alpha-D-ribose 1-diphosphate + ATP. The protein operates within amino-acid biosynthesis; L-histidine biosynthesis; L-histidine from 5-phospho-alpha-D-ribose 1-diphosphate: step 1/9. Catalyzes the condensation of ATP and 5-phosphoribose 1-diphosphate to form N'-(5'-phosphoribosyl)-ATP (PR-ATP). Has a crucial role in the pathway because the rate of histidine biosynthesis seems to be controlled primarily by regulation of HisG enzymatic activity. This chain is ATP phosphoribosyltransferase, found in Ruminiclostridium cellulolyticum (strain ATCC 35319 / DSM 5812 / JCM 6584 / H10) (Clostridium cellulolyticum).